The following is a 120-amino-acid chain: MDKNEFLKKLDEKFKESEQKNLEALEKIRSNLPQLEIEIFGEKLTAIIPPLSVEKEMIEDAKNLEPLDFALKYIPILYGIPKEKVEELPSIVIAELIKKYFEAYKQLNKDKSFRNRVGTK.

This is an uncharacterized protein from Methanocaldococcus jannaschii (strain ATCC 43067 / DSM 2661 / JAL-1 / JCM 10045 / NBRC 100440) (Methanococcus jannaschii).